A 147-amino-acid polypeptide reads, in one-letter code: Ribosomal RNA large subunit methyltransferase H (147 aa).

S-adenosyl-L-methionine is bound by residues Leu64, Gly95, and 114–119; that span reads LSSLTL.

It belongs to the RNA methyltransferase RlmH family. As to quaternary structure, homodimer.

It is found in the cytoplasm. It carries out the reaction pseudouridine(1915) in 23S rRNA + S-adenosyl-L-methionine = N(3)-methylpseudouridine(1915) in 23S rRNA + S-adenosyl-L-homocysteine + H(+). In terms of biological role, specifically methylates the pseudouridine at position 1915 (m3Psi1915) in 23S rRNA. The protein is Ribosomal RNA large subunit methyltransferase H of Polynucleobacter asymbioticus (strain DSM 18221 / CIP 109841 / QLW-P1DMWA-1) (Polynucleobacter necessarius subsp. asymbioticus).